Here is a 302-residue protein sequence, read N- to C-terminus: tRNA demethylase abh1 (302 aa).

Residues Trp-142 and 149–151 (YDW) contribute to the substrate site. The region spanning 187 to 299 (KAEAAIVNFY…RVNFNVRQVR (113 aa)) is the Fe2OG dioxygenase domain. Residue 194–196 (NFY) participates in 2-oxoglutarate binding. Residues His-205 and Asp-207 each contribute to the Fe cation site. Arg-235 is a binding site for substrate. His-261 provides a ligand contact to Fe cation. 290-296 (RVNFNVR) serves as a coordination point for 2-oxoglutarate.

The protein belongs to the alkB family. Fe(2+) is required as a cofactor.

It localises to the cytoplasm. The protein localises to the nucleus. It carries out the reaction an N(1)-methyladenosine in tRNA + 2-oxoglutarate + O2 = an adenosine in tRNA + formaldehyde + succinate + CO2. The catalysed reaction is N(1)-methyladenosine(58) in tRNA + 2-oxoglutarate + O2 = adenosine(58) in tRNA + formaldehyde + succinate + CO2. In terms of biological role, dioxygenase that acts as on nucleic acids, such as DNA and tRNA. Requires molecular oxygen, alpha-ketoglutarate and iron. Mainly acts as a tRNA demethylase by removing N(1)-methyladenine from various tRNAs, with a preference for N(1)-methyladenine at position 58 (m1A58) present on a stem loop structure of tRNAs. Acts as a regulator of translation initiation and elongation. Does not appear to possess DNA repair activity; no activity towards methylated DNA or etheno adducts. Exhibits a weak and unstable DNA lyase activity; this activity is probably not biologically significant and proceeds by a mechanism different from the classical dioxygenase reaction as it does not require 2-oxoglutarate or iron. The protein is tRNA demethylase abh1 (abh1) of Schizosaccharomyces pombe (strain 972 / ATCC 24843) (Fission yeast).